The primary structure comprises 260 residues: MDANTKTILFFVVFFIDLFSPNILFVYAREIGNKPLFTYKQKTEKGPAEWGKLDPQWKVCSTGKIQSPIDLTDERVSLIHDQALSKHYKPASAVIQSRGHDVMVSWKGDGGKITIHQTDYKLVQCHWHSPSEHTINGTSYDLELHMVHTSASGKTTVVGVLYKLGEPDEFLTKILNGIKGVGKKEIDLGIVDPRDIRFETNNFYRYIGSLTIPPCTEGVIWTVQKRVLYFFCFCYRLIIFVTPYINIFWIFVFVFWCMLM.

The N-terminal stretch at 1–28 (MDANTKTILFFVVFFIDLFSPNILFVYA) is a signal peptide. One can recognise an Alpha-carbonic anhydrase domain in the interval 35-260 (PLFTYKQKTE…FVFVFWCMLM (226 aa)). Residues Cys60 and Cys215 are joined by a disulfide bond. His100 acts as the Proton acceptor in catalysis. Residues His126 and His128 each coordinate Zn(2+). Residue Asn136 is glycosylated (N-linked (GlcNAc...) asparagine). His145 serves as a coordination point for Zn(2+). 211–212 (TI) contacts substrate.

It belongs to the alpha-class carbonic anhydrase family. It depends on Zn(2+) as a cofactor. Post-translationally, N-glycosylated.

The protein localises to the plastid. The protein resides in the chloroplast stroma. It catalyses the reaction hydrogencarbonate + H(+) = CO2 + H2O. In terms of biological role, reversible hydration of carbon dioxide. In Arabidopsis thaliana (Mouse-ear cress), this protein is Alpha carbonic anhydrase 6 (ACA6).